The sequence spans 340 residues: NADH-quinone oxidoreductase subunit H 2 (340 aa).

8 consecutive transmembrane segments (helical) span residues 10–30 (LIVAFGLIVFKVALLIAILLL), 84–104 (FLFKLAPILALAPPFVVFVAI), 126–146 (VALLFVFAVIGIEVFGVIFGG), 172–192 (MGFAVIGVVMLAQSMSLLDIV), 198–218 (VWNIVYQPVGFFVFFVAGLAE), 255–275 (VIVLLVSVLLVILFFGGWNGI), 279–299 (MPPLLWFLLKVAFFVYLFIWF), and 318–338 (VLLPLSMANIIITGVLLGAAA).

It belongs to the complex I subunit 1 family. NDH-1 is composed of 14 different subunits. Subunits NuoA, H, J, K, L, M, N constitute the membrane sector of the complex.

The protein localises to the cell inner membrane. The catalysed reaction is a quinone + NADH + 5 H(+)(in) = a quinol + NAD(+) + 4 H(+)(out). NDH-1 shuttles electrons from NADH, via FMN and iron-sulfur (Fe-S) centers, to quinones in the respiratory chain. The immediate electron acceptor for the enzyme in this species is believed to be ubiquinone. Couples the redox reaction to proton translocation (for every two electrons transferred, four hydrogen ions are translocated across the cytoplasmic membrane), and thus conserves the redox energy in a proton gradient. This subunit may bind ubiquinone. This is NADH-quinone oxidoreductase subunit H 2 from Rhizobium etli (strain ATCC 51251 / DSM 11541 / JCM 21823 / NBRC 15573 / CFN 42).